A 237-amino-acid polypeptide reads, in one-letter code: Probable transcriptional regulatory protein NIS_0560 (237 aa).

It belongs to the TACO1 family.

The protein localises to the cytoplasm. In Nitratiruptor sp. (strain SB155-2), this protein is Probable transcriptional regulatory protein NIS_0560.